Reading from the N-terminus, the 103-residue chain is N(4)-acetylcytidine amidohydrolase (103 aa).

The 96-residue stretch at 6 to 101 folds into the ASCH domain; that stretch reads ITFFQRFQDD…QTQFYVIEFK (96 aa). Lys21 acts as the Proton acceptor in catalysis. Thr24 functions as the Nucleophile in the catalytic mechanism. The active-site Proton donor is the Glu74.

This sequence belongs to the N(4)-acetylcytidine amidohydrolase family.

It catalyses the reaction N(4)-acetylcytidine + H2O = cytidine + acetate + H(+). It carries out the reaction N(4)-acetyl-2'-deoxycytidine + H2O = 2'-deoxycytidine + acetate + H(+). The enzyme catalyses N(4)-acetylcytosine + H2O = cytosine + acetate + H(+). Functionally, catalyzes the hydrolysis of N(4)-acetylcytidine (ac4C). The sequence is that of N(4)-acetylcytidine amidohydrolase (yqfB) from Escherichia fergusonii (strain ATCC 35469 / DSM 13698 / CCUG 18766 / IAM 14443 / JCM 21226 / LMG 7866 / NBRC 102419 / NCTC 12128 / CDC 0568-73).